The chain runs to 370 residues: Gibberellin 3-beta-dioxygenase 2-2 (370 aa).

Positions 205–306 (MTATMHLNWY…RISLGYFLGP (102 aa)) constitute a Fe2OG dioxygenase domain. The Fe cation site is built by H229, D231, and H287. Residue R297 is part of the active site.

It belongs to the iron/ascorbate-dependent oxidoreductase family. GA3OX subfamily. The cofactor is L-ascorbate. Fe cation is required as a cofactor.

The catalysed reaction is gibberellin A20 + 2-oxoglutarate + O2 = gibberellin A1 + succinate + CO2. Functionally, converts the inactive gibberellin precursors GA9 and GA20 in the bioactives gibberellins GA4 and GA1. The polypeptide is Gibberellin 3-beta-dioxygenase 2-2 (GA3ox2-2) (Triticum aestivum (Wheat)).